The primary structure comprises 204 residues: Thiamine-phosphate synthase (204 aa).

4-amino-2-methyl-5-(diphosphooxymethyl)pyrimidine contacts are provided by residues 32–36 and D64; that span reads QLRMK. The Mg(2+) site is built by D65 and D84. T103 serves as a coordination point for 4-amino-2-methyl-5-(diphosphooxymethyl)pyrimidine. 129 to 131 lines the 2-[(2R,5Z)-2-carboxy-4-methylthiazol-5(2H)-ylidene]ethyl phosphate pocket; that stretch reads TTT. K132 contacts 4-amino-2-methyl-5-(diphosphooxymethyl)pyrimidine. Position 165 (G165) interacts with 2-[(2R,5Z)-2-carboxy-4-methylthiazol-5(2H)-ylidene]ethyl phosphate.

The protein belongs to the thiamine-phosphate synthase family. Requires Mg(2+) as cofactor.

The enzyme catalyses 2-[(2R,5Z)-2-carboxy-4-methylthiazol-5(2H)-ylidene]ethyl phosphate + 4-amino-2-methyl-5-(diphosphooxymethyl)pyrimidine + 2 H(+) = thiamine phosphate + CO2 + diphosphate. The catalysed reaction is 2-(2-carboxy-4-methylthiazol-5-yl)ethyl phosphate + 4-amino-2-methyl-5-(diphosphooxymethyl)pyrimidine + 2 H(+) = thiamine phosphate + CO2 + diphosphate. It carries out the reaction 4-methyl-5-(2-phosphooxyethyl)-thiazole + 4-amino-2-methyl-5-(diphosphooxymethyl)pyrimidine + H(+) = thiamine phosphate + diphosphate. It functions in the pathway cofactor biosynthesis; thiamine diphosphate biosynthesis; thiamine phosphate from 4-amino-2-methyl-5-diphosphomethylpyrimidine and 4-methyl-5-(2-phosphoethyl)-thiazole: step 1/1. Its function is as follows. Condenses 4-methyl-5-(beta-hydroxyethyl)thiazole monophosphate (THZ-P) and 2-methyl-4-amino-5-hydroxymethyl pyrimidine pyrophosphate (HMP-PP) to form thiamine monophosphate (TMP). The chain is Thiamine-phosphate synthase from Bacteroides fragilis (strain YCH46).